A 470-amino-acid chain; its full sequence is Desmin (470 aa).

Positions 2-108 are head; it reads SQAYSSSQRV…QEFLTTRTNE (107 aa). The residue at position 7 (Ser-7) is a Phosphoserine; by CDK1. Residue Ser-12 is modified to Phosphoserine; by AURKB. Arg-16 is subject to Omega-N-methylarginine. A Phosphothreonine; by AURKB and ROCK1 modification is found at Thr-17. Phosphoserine; by CDK1 is present on Ser-28. Ser-31 bears the Phosphoserine mark. Position 32 is a phosphoserine; by CDK1 (Ser-32). Arg-37 carries the asymmetric dimethylarginine; alternate modification. Omega-N-methylarginine; alternate is present on Arg-37. Ser-45 bears the Phosphoserine mark. The residue at position 58 (Arg-58) is an ADP-ribosylarginine. Ser-60 is modified (phosphoserine; by AURKB). At Ser-68 the chain carries Phosphoserine. Arg-70 is subject to Omega-N-methylarginine. A phosphothreonine; by ROCK1 mark is found at Thr-76 and Thr-77. Residue Ser-81 is modified to Phosphoserine. The 309-residue stretch at 108–416 folds into the IF rod domain; it reads EKVELQELND…KLLEGEESRI (309 aa). Positions 109–141 are coil 1A; sequence KVELQELNDRFANYIEKVRFLEQQNAALAAEVN. The linker 1 stretch occupies residues 142 to 151; it reads RLKGREPTRV. The interval 152–252 is coil 1B; the sequence is AELYEEELRE…HEEEIRELQA (101 aa). The segment at 253 to 268 is linker 12; it reads QLQEQQVQVEMDMSKP. The interaction with NEB stretch occupies residues 268–415; the sequence is PDLTAALRDI…RKLLEGEESR (148 aa). Positions 269–287 are coil 2A; it reads DLTAALRDIRAQYETIAAK. Residues 288–295 are linker 2; that stretch reads NISEAEEW. Residues Ser-290, Ser-358, Ser-361, and Ser-424 each carry the phosphoserine modification. The interval 296–412 is coil 2B; that stretch reads YKSKVSDLTQ…ATYRKLLEGE (117 aa). Residues 413-470 are tail; it reads ESRINLPIQTYSALNFRETSPEQRGSEVHTKKTVMIKTIETRDGEVVSEATQQQHEVL. An interaction with CRYAB region spans residues 438-453; sequence SEVHTKKTVMIKTIET.

Belongs to the intermediate filament family. Homomer. Interacts with DST. Interacts with MTM1. Interacts with EPPK1; interaction is dependent of higher-order structure of intermediate filament. Interacts with CRYAB. Interacts with NEB (via nebulin repeats 160-164). Interacts (via rod region) with NEBL (via nebulin repeats 1-5). Interacts with ASB2 isoform 1; the interaction targets DES for proteasomal degradation. Interacts with PLEC isoform 1C. Interacts with PKP1. Interacts with FLII. ADP-ribosylation prevents ability to form intermediate filaments. In terms of processing, phosphorylation at Ser-7, Ser-28 and Ser-32 by CDK1, phosphorylation at Ser-60 by AURKB and phosphorylation at Thr-76 by ROCK1 contribute to efficient separation of desmin intermediate filaments during mitosis. Post-translationally, ubiquitination by a SCF-like complex containing ASB2 isoform 1 leads to proteasomal degradation.

It is found in the cytoplasm. The protein resides in the myofibril. The protein localises to the sarcomere. It localises to the z line. Its subcellular location is the cell membrane. It is found in the sarcolemma. The protein resides in the nucleus. The protein localises to the cell tip. It localises to the nucleus envelope. Muscle-specific type III intermediate filament essential for proper muscular structure and function. Plays a crucial role in maintaining the structure of sarcomeres, inter-connecting the Z-disks and forming the myofibrils, linking them not only to the sarcolemmal cytoskeleton, but also to the nucleus and mitochondria, thus providing strength for the muscle fiber during activity. In adult striated muscle they form a fibrous network connecting myofibrils to each other and to the plasma membrane from the periphery of the Z-line structures. May act as a sarcomeric microtubule-anchoring protein: specifically associates with detyrosinated tubulin-alpha chains, leading to buckled microtubules and mechanical resistance to contraction. Required for nuclear membrane integrity, via anchoring at the cell tip and nuclear envelope, resulting in maintenance of microtubule-derived intracellular mechanical forces. Contributes to the transcriptional regulation of the NKX2-5 gene in cardiac progenitor cells during a short period of cardiomyogenesis and in cardiac side population stem cells in the adult. Plays a role in maintaining an optimal conformation of nebulette (NEB) on heart muscle sarcomeres to bind and recruit cardiac alpha-actin. This chain is Desmin (DES), found in Homo sapiens (Human).